The chain runs to 26 residues: CKGKGQSCSKLMYDCCTGSCSRRGKC.

3 cysteine pairs are disulfide-bonded: cysteine 1–cysteine 16, cysteine 8–cysteine 20, and cysteine 15–cysteine 26. Position 26 is a cysteine amide (cysteine 26).

The protein belongs to the conotoxin O1 superfamily. In terms of tissue distribution, expressed by the venom duct.

Its subcellular location is the secreted. Omega-conotoxins act at presynaptic membranes, they bind and block voltage-gated calcium channels (Cav). This toxin blocks N-, P- and Q-type calcium channels. This chain is Omega-conotoxin CVIC, found in Conus catus (Cat cone).